Here is a 921-residue protein sequence, read N- to C-terminus: MDAPATASRQPIAEEPRMSQESSLSTVSTTSLVFDRLHEHNEKSYHSSSQRRRAPSASRGGYADHPDDDDDDDESYKEADTNDLETGPFLAPASVMMRRVGVDRGLKKVILILAAAFLFAWGAALFVFLSNKSYKHASTIDHDPSATSRGSGKPVTLDQVISGFWYPTSHSISWIEGPNGEDGLLLEQGARGKDYLVVEDVRSGNKDSQVSANVVQSRTLMKNPWINVGGRQLAPSDTRPSKDMKKVLVSTDRQRNWRYSYTALYWIFDVETQTAEALDPEHPDGRVQLATWSPQSNAIVFTRDNNLFLRKLDGDKKVTQITNDGGPEYFYGIPDWVYEEEVFATNSATWYSEDGKYVAFLRTNETGVPEYPLQYFLSRPSGKEKPPGEETYPDEKRIKYPRAGSHNPVVDLLFFDVERGDVFSVDIDGGFADDDRLINMVLWANDKVLIKETNRVSDIMRVVLVDVVARTGKTVNTIDVGELDGGWFEISHTTQFIPADPANGRPQDGYIDTVVHGNGDHIAYFSPMDNAEPVYLTGGDWEVDDGPSAVDLKNNLVYFVATKESSIQRHVYSVHLNRSDLKPFTDTKFESYYDISFSSGAGYALLSYQGPKIPWQKVVSTPSSPVSYEHVVEKNEDLAENAKKYELPILNYGTLKVDGVELNYVERRPPHFDEKKKYPVLFQQYSGPGSQSVHKKFAVDFQSYVASALGYLVVTVDGRGTGFIGRKNRVLIRDHLGYWEAHDQIAAAQAWAAKKYVDPARIAIWGWSYGGFNTLKTLEMDAGRTFSYGMAVAPVTDWRFYDSIYTERYMRTPQLNPSGYDQTAVSNVSALAGNVRWLMMHGVGDDNVHYQNTLTLLDKLDLNGIENYDVHVFPDSDHGIYFHGANRIVYDKLSNWLINAFNGEWLKVAGAKPIVEPKARV.

Positions 1–87 (MDAPATASRQ…EADTNDLETG (87 aa)) are disordered. The Cytoplasmic segment spans residues 1-108 (MDAPATASRQ…RVGVDRGLKK (108 aa)). The segment covering 22-33 (SSLSTVSTTSLV) has biased composition (low complexity). Basic and acidic residues predominate over residues 35–45 (DRLHEHNEKSY). The span at 66–75 (PDDDDDDDES) shows a compositional bias: acidic residues. Residues 109 to 129 (VILILAAAFLFAWGAALFVFL) traverse the membrane as a helical; Signal-anchor for type II membrane protein segment. The Vacuolar portion of the chain corresponds to 130–921 (SNKSYKHAST…KPIVEPKARV (792 aa)). N-linked (GlcNAc...) asparagine glycosylation is found at N131, N364, and N577. S768 serves as the catalytic Charge relay system. The N-linked (GlcNAc...) asparagine glycan is linked to N827. Residues D845 and H878 each act as charge relay system in the active site.

Belongs to the peptidase S9B family.

The protein localises to the vacuole membrane. The catalysed reaction is Release of an N-terminal dipeptide, Xaa-Yaa-|-Zaa-, from a polypeptide, preferentially when Yaa is Pro, provided Zaa is neither Pro nor hydroxyproline.. Type IV dipeptidyl-peptidase which removes N-terminal dipeptides sequentially from polypeptides having unsubstituted N-termini provided that the penultimate residue is proline. This is Probable dipeptidyl-aminopeptidase B (DAPB) from Colletotrichum graminicola (strain M1.001 / M2 / FGSC 10212) (Maize anthracnose fungus).